A 186-amino-acid chain; its full sequence is Elongation factor P (186 aa).

The protein belongs to the elongation factor P family.

It is found in the cytoplasm. Its pathway is protein biosynthesis; polypeptide chain elongation. Functionally, involved in peptide bond synthesis. Stimulates efficient translation and peptide-bond synthesis on native or reconstituted 70S ribosomes in vitro. Probably functions indirectly by altering the affinity of the ribosome for aminoacyl-tRNA, thus increasing their reactivity as acceptors for peptidyl transferase. This chain is Elongation factor P, found in Brucella abortus (strain S19).